The primary structure comprises 715 residues: Arginine kinase (715 aa).

2 Approximate repeats span residues 1–366 and 367–715; these read MADP…IAKK and RSVF…KSTK. The Phosphagen kinase N-terminal 1 domain maps to 11 to 95; that stretch reads KSKNAFPDPL…FDAIIEDYHS (85 aa). 68-72 is a binding site for substrate; the sequence is GVGVY. In terms of domain architecture, Phosphagen kinase C-terminal 1 spans 123-362; sequence YIRSTRIRVA…KALMELEKEA (240 aa). Residues 126–130 and His-189 each bind ATP; that span reads STRIR. Position 229 (Glu-229) interacts with substrate. Position 233 (Arg-233) interacts with ATP. Position 275 (Cys-275) interacts with substrate. Residues 284–288 and 312–317 each bind ATP; these read RASVH and RGIHGE. Glu-317 contacts substrate. The 83-residue stretch at 365–447 folds into the Phosphagen kinase N-terminal 2 domain; sequence KKRSVFPEVL…FDKIVEDYHS (83 aa). Residues 475 to 714 form the Phosphagen kinase C-terminal 2 domain; the sequence is YIRSTRIRVA…KKLLEIEKST (240 aa).

It belongs to the ATP:guanido phosphotransferase family. In terms of assembly, monomer.

The enzyme catalyses L-arginine + ATP = N(omega)-phospho-L-arginine + ADP + H(+). This is Arginine kinase from Anthopleura japonica (Sea anemone).